The primary structure comprises 253 residues: Probable transcriptional regulatory protein TM_0466 (253 aa).

It belongs to the TACO1 family.

The protein localises to the cytoplasm. In Thermotoga maritima (strain ATCC 43589 / DSM 3109 / JCM 10099 / NBRC 100826 / MSB8), this protein is Probable transcriptional regulatory protein TM_0466.